The primary structure comprises 84 residues: RNA-binding protein Hfq (84 aa).

In terms of domain architecture, Sm spans 10 to 70 (DNVLNQVRKN…VSTIIPGKTL (61 aa)).

Belongs to the Hfq family. As to quaternary structure, homohexamer.

In terms of biological role, RNA chaperone that binds small regulatory RNA (sRNAs) and mRNAs to facilitate mRNA translational regulation in response to envelope stress, environmental stress and changes in metabolite concentrations. Also binds with high specificity to tRNAs. This Natranaerobius thermophilus (strain ATCC BAA-1301 / DSM 18059 / JW/NM-WN-LF) protein is RNA-binding protein Hfq.